The following is an 89-amino-acid chain: Large ribosomal subunit protein eL43 (89 aa).

Residues cysteine 38, cysteine 41, cysteine 56, and cysteine 59 each contribute to the Zn(2+) site. The C4-type zinc finger occupies cysteine 38–cysteine 59.

It belongs to the eukaryotic ribosomal protein eL43 family. Putative zinc-binding subfamily. In terms of assembly, part of the 50S ribosomal subunit. Requires Zn(2+) as cofactor.

Its function is as follows. Binds to the 23S rRNA. The polypeptide is Large ribosomal subunit protein eL43 (Methanopyrus kandleri (strain AV19 / DSM 6324 / JCM 9639 / NBRC 100938)).